We begin with the raw amino-acid sequence, 301 residues long: Glycine--tRNA ligase alpha subunit (301 aa).

It belongs to the class-II aminoacyl-tRNA synthetase family. In terms of assembly, tetramer of two alpha and two beta subunits.

The protein resides in the cytoplasm. The catalysed reaction is tRNA(Gly) + glycine + ATP = glycyl-tRNA(Gly) + AMP + diphosphate. The protein is Glycine--tRNA ligase alpha subunit of Shewanella baltica (strain OS223).